We begin with the raw amino-acid sequence, 269 residues long: Shikimate dehydrogenase (NADP(+)) (269 aa).

Residues 14–16 (SKS) and Thr61 contribute to the shikimate site. The active-site Proton acceptor is the Lys65. Residue Glu77 participates in NADP(+) binding. Residues Asn86 and Asp102 each contribute to the shikimate site. Residues 126-130 (GAGGA), 150-155 (NRTYEK), and Met213 each bind NADP(+). A shikimate-binding site is contributed by Tyr215. An NADP(+)-binding site is contributed by Gly237.

It belongs to the shikimate dehydrogenase family. As to quaternary structure, homodimer.

The catalysed reaction is shikimate + NADP(+) = 3-dehydroshikimate + NADPH + H(+). It functions in the pathway metabolic intermediate biosynthesis; chorismate biosynthesis; chorismate from D-erythrose 4-phosphate and phosphoenolpyruvate: step 4/7. Functionally, involved in the biosynthesis of the chorismate, which leads to the biosynthesis of aromatic amino acids. Catalyzes the reversible NADPH linked reduction of 3-dehydroshikimate (DHSA) to yield shikimate (SA). The protein is Shikimate dehydrogenase (NADP(+)) of Aliivibrio fischeri (strain ATCC 700601 / ES114) (Vibrio fischeri).